The chain runs to 388 residues: Na(+)/H(+) antiporter NhaA (388 aa).

The Cytoplasmic segment spans residues Met-1 to Asp-11. The helical transmembrane segment at Ala-12–Ser-31 threads the bilayer. Over Gly-32–Asn-58 the chain is Periplasmic. The chain crosses the membrane as a helical span at residues Met-59–Lys-80. The Cytoplasmic portion of the chain corresponds to Arg-81–Phe-96. A helical membrane pass occupies residues Pro-97–Asn-116. Residues Tyr-117 to Thr-122 are Periplasmic-facing. A helical transmembrane segment spans residues Arg-123 to Ala-130. The Cytoplasmic portion of the chain corresponds to Ala-131–Ile-154. The chain crosses the membrane as a helical span at residues Phe-155–Thr-176. At Asn-177–Ser-180 the chain is on the periplasmic side. A helical transmembrane segment spans residues Met-181 to Cys-200. Over Gly-201–Arg-204 the chain is Cytoplasmic. The chain crosses the membrane as a helical span at residues Thr-205–Ser-222. Position 223 (Gly-223) is a topological domain, periplasmic. Residues Val-224 to Phe-236 traverse the membrane as a helical segment. The Cytoplasmic portion of the chain corresponds to Ile-237–His-253. Residues Val-254 to Ala-272 form a helical membrane-spanning segment. At Gly-273–Ser-286 the chain is on the periplasmic side. Residues Ile-287–Leu-310 form a helical membrane-spanning segment. The Cytoplasmic portion of the chain corresponds to Ala-311 to Phe-339. The chain crosses the membrane as a helical span at residues Thr-340–Phe-350. Topologically, residues Gly-351–Leu-357 are periplasmic. Residues Ile-358–Leu-380 form a helical membrane-spanning segment. Over Arg-381 to Val-388 the chain is Cytoplasmic.

The protein belongs to the NhaA Na(+)/H(+) (TC 2.A.33) antiporter family.

It localises to the cell inner membrane. The catalysed reaction is Na(+)(in) + 2 H(+)(out) = Na(+)(out) + 2 H(+)(in). Its function is as follows. Na(+)/H(+) antiporter that extrudes sodium in exchange for external protons. The chain is Na(+)/H(+) antiporter NhaA from Shigella boydii serotype 4 (strain Sb227).